We begin with the raw amino-acid sequence, 71 residues long: uncharacterized protein (71 aa).

Basic residues predominate over residues 1-16; sequence MAKSQAKKKRGHRLRN. Disordered regions lie at residues 1–39 and 51–71; these read MAKSQAKKKRGHRLRNGGRDVLLSRGSTPSFSTHGRMTK and KNPYDHTAVDDKDFFVPQKAA. Residues 25–35 are compositionally biased toward polar residues; sequence RGSTPSFSTHG. A compositionally biased stretch (basic and acidic residues) spans 51-64; the sequence is KNPYDHTAVDDKDF.

This is an uncharacterized protein from Bacillus subtilis (strain 168).